Reading from the N-terminus, the 580-residue chain is Adenine deaminase (580 aa).

This sequence belongs to the metallo-dependent hydrolases superfamily. Adenine deaminase family. Mn(2+) serves as cofactor.

The enzyme catalyses adenine + H2O + H(+) = hypoxanthine + NH4(+). The protein is Adenine deaminase of Listeria monocytogenes serovar 1/2a (strain ATCC BAA-679 / EGD-e).